We begin with the raw amino-acid sequence, 202 residues long: Small ribosomal subunit protein uS4c (202 aa).

One can recognise an S4 RNA-binding domain in the interval 90-153 (MRLDNVTFRL…KSETIISKNI (64 aa)).

This sequence belongs to the universal ribosomal protein uS4 family. In terms of assembly, part of the 30S ribosomal subunit. Contacts protein S5. The interaction surface between S4 and S5 is involved in control of translational fidelity.

It localises to the plastid. The protein localises to the chloroplast. Its function is as follows. One of the primary rRNA binding proteins, it binds directly to 16S rRNA where it nucleates assembly of the body of the 30S subunit. Functionally, with S5 and S12 plays an important role in translational accuracy. This is Small ribosomal subunit protein uS4c (rps4) from Hypnum cupressiforme (Cypress-leaved plait-moss).